The sequence spans 224 residues: 7-cyano-7-deazaguanine synthase (224 aa).

An ATP-binding site is contributed by 11 to 21; the sequence is FSGGQDSTTCL. 4 residues coordinate Zn(2+): Cys190, Cys199, Cys202, and Cys205.

Belongs to the QueC family. It depends on Zn(2+) as a cofactor.

It carries out the reaction 7-carboxy-7-deazaguanine + NH4(+) + ATP = 7-cyano-7-deazaguanine + ADP + phosphate + H2O + H(+). It functions in the pathway purine metabolism; 7-cyano-7-deazaguanine biosynthesis. Functionally, catalyzes the ATP-dependent conversion of 7-carboxy-7-deazaguanine (CDG) to 7-cyano-7-deazaguanine (preQ(0)). In Parabacteroides distasonis (strain ATCC 8503 / DSM 20701 / CIP 104284 / JCM 5825 / NCTC 11152), this protein is 7-cyano-7-deazaguanine synthase.